Consider the following 502-residue polypeptide: ATP synthase subunit alpha (502 aa).

G169–T176 contacts ATP.

This sequence belongs to the ATPase alpha/beta chains family. F-type ATPases have 2 components, CF(1) - the catalytic core - and CF(0) - the membrane proton channel. CF(1) has five subunits: alpha(3), beta(3), gamma(1), delta(1), epsilon(1). CF(0) has three main subunits: a(1), b(2) and c(9-12). The alpha and beta chains form an alternating ring which encloses part of the gamma chain. CF(1) is attached to CF(0) by a central stalk formed by the gamma and epsilon chains, while a peripheral stalk is formed by the delta and b chains.

It is found in the cell membrane. The catalysed reaction is ATP + H2O + 4 H(+)(in) = ADP + phosphate + 5 H(+)(out). Its function is as follows. Produces ATP from ADP in the presence of a proton gradient across the membrane. The alpha chain is a regulatory subunit. This chain is ATP synthase subunit alpha, found in Exiguobacterium sibiricum (strain DSM 17290 / CCUG 55495 / CIP 109462 / JCM 13490 / 255-15).